Consider the following 615-residue polypeptide: Leucine aminopeptidase 2 (615 aa).

Residues 139-141 and 271-276 contribute to the a peptide site; these read QCQ and PYGGME. His300 serves as a coordination point for Zn(2+). The active-site Proton acceptor is the Glu301. The Zn(2+) site is built by His304 and Glu323. The Proton donor role is filled by Tyr386.

Belongs to the peptidase M1 family. Zn(2+) serves as cofactor.

It is found in the cytoplasm. The protein localises to the nucleus. It carries out the reaction an epoxide + H2O = an ethanediol. Its function is as follows. Aminopeptidase that preferentially cleaves di- and tripeptides. Also has low epoxide hydrolase activity (in vitro). Can hydrolyze the epoxide leukotriene LTA(4) but it forms preferentially 5,6-dihydroxy-7,9,11,14-eicosatetraenoic acid rather than the cytokine leukotriene B(4) as the product compared to the homologous mammalian enzyme (in vitro). This is Leucine aminopeptidase 2 from Aspergillus oryzae (strain ATCC 42149 / RIB 40) (Yellow koji mold).